A 1462-amino-acid chain; its full sequence is uncharacterized protein (1462 aa).

The chain crosses the membrane as a helical span at residues 119 to 139; sequence TGYITSLCLSAILKFFSFRII. A phosphoserine mark is found at Ser-411 and Ser-420. The 190-residue stretch at 541–730 folds into the SEC7 domain; the sequence is TLIESKKRKA…SEIYKAIKEN (190 aa). The HEAT repeat unit spans residues 1102–1139; the sequence is ENSEDWGLFSKLCNLLNDKNIVVRNQSLSLFHQLVNKY.

Its subcellular location is the cytoplasm. It localises to the golgi apparatus membrane. This is an uncharacterized protein from Schizosaccharomyces pombe (strain 972 / ATCC 24843) (Fission yeast).